A 185-amino-acid chain; its full sequence is Elongation factor P (185 aa).

The protein belongs to the elongation factor P family.

Its subcellular location is the cytoplasm. The protein operates within protein biosynthesis; polypeptide chain elongation. In terms of biological role, involved in peptide bond synthesis. Stimulates efficient translation and peptide-bond synthesis on native or reconstituted 70S ribosomes in vitro. Probably functions indirectly by altering the affinity of the ribosome for aminoacyl-tRNA, thus increasing their reactivity as acceptors for peptidyl transferase. This Desulforudis audaxviator (strain MP104C) protein is Elongation factor P.